The chain runs to 185 residues: Photosystem I assembly protein Ycf4 (185 aa).

Helical transmembrane passes span 24–44 and 66–86; these read YIIG…SISS and IIMG…WYMV.

This sequence belongs to the Ycf4 family.

It is found in the cellular thylakoid membrane. Functionally, seems to be required for the assembly of the photosystem I complex. This chain is Photosystem I assembly protein Ycf4, found in Prochlorococcus marinus (strain MIT 9312).